Here is a 788-residue protein sequence, read N- to C-terminus: Integrin beta-6 (788 aa).

The first 21 residues, 1-21, serve as a signal peptide directing secretion; that stretch reads MGIELLCLFFLFLGRNDHVQG. The 50-residue stretch at 22-71 folds into the PSI domain; the sequence is GCALGGAETCEDCLLIGPQCAWCAQENFTHPSGVGERCDTPANLLAKGCQ. At 22 to 709 the chain is on the extracellular side; sequence GCALGGAETC…KDCPKPPNIP (688 aa). 19 cysteine pairs are disulfide-bonded: Cys-23–Cys-41, Cys-31–Cys-454, Cys-34–Cys-59, Cys-44–Cys-70, Cys-197–Cys-204, Cys-252–Cys-293, Cys-394–Cys-406, Cys-426–Cys-452, Cys-456–Cys-476, Cys-467–Cys-479, Cys-481–Cys-490, Cys-492–Cys-519, Cys-502–Cys-517, Cys-511–Cys-522, Cys-524–Cys-537, Cys-539–Cys-560, Cys-544–Cys-558, Cys-552–Cys-563, and Cys-565–Cys-574. Residues Asn-48 and Asn-97 are each glycosylated (N-linked (GlcNAc...) asparagine). Residues 131 to 371 enclose the VWFA domain; it reads YPVDLYYLMD…QLIISAYEEL (241 aa). The Mg(2+) site is built by Asp-140, Ser-142, and Ser-144. The Ca(2+) site is built by Ser-144, Asp-147, Asp-148, and Glu-179. Ca(2+) is bound by residues Asn-235, Asp-237, Pro-239, and Glu-240. Glu-240 contacts Mg(2+). The N-linked (GlcNAc...) asparagine glycan is linked to Asn-260. Residues Asp-271 and Lys-355 each coordinate Ca(2+). Asn-387 and Asn-396 each carry an N-linked (GlcNAc...) asparagine glycan. 4 I-EGF domains span residues 456–491, 492–538, 539–575, and 576–615; these read CQKEVEVNSSKCHHGNGSFQCGVCACHPGHMGPRCE, CGED…PYCQ, CDNFSCVRHKGLLCGGNGDCDCGECVCRSGWTGEYCN, and CTTSTDSCVSEDGVLCSGRGDCVCGKCVCTNPGASGPTCE. N-linked (GlcNAc...) asparagine glycosylation is found at Asn-463 and Asn-471. N-linked (GlcNAc...) asparagine glycosylation occurs at Asn-541. Asn-575 is a glycosylation site (N-linked (GlcNAc...) asparagine). Intrachain disulfides connect Cys-576-Cys-599, Cys-583-Cys-597, Cys-591-Cys-602, Cys-604-Cys-614, Cys-617-Cys-620, Cys-624-Cys-670, Cys-630-Cys-649, Cys-633-Cys-645, and Cys-678-Cys-702. Residues 710-730 form a helical membrane-spanning segment; the sequence is MIMLGVSLAILLIGVVLLCIW. Residues 731–758 form an interaction with HAX1 region; that stretch reads KLLVSFHDRKEVAKFEAERSKAKWQTGT. Residues 731–788 lie on the Cytoplasmic side of the membrane; sequence KLLVSFHDRKEVAKFEAERSKAKWQTGTNPLYRGSTSTFKNVTYKHREKQKVDLSTDC.

It belongs to the integrin beta chain family. Heterodimer of an alpha and a beta subunit. Interacts with FLNB. Interacts with HAX1. ITGAV:ITGB6 interacts with FBN1. ITGAV:ITGB6 interacts with TGFB1. As to quaternary structure, (Microbial infection) Integrin ITGAV:ITGB6 interacts with coxsackievirus A9, coxsackievirus B1 capsid proteins. In terms of assembly, (Microbial infection) Integrin ITGAV:ITGB6 interacts with herpes simplex virus-1/HHV-1 gH:gL proteins.

Its subcellular location is the cell membrane. It is found in the cell junction. The protein resides in the focal adhesion. Its function is as follows. Integrin alpha-V:beta-6 (ITGAV:ITGB6) is a receptor for fibronectin and cytotactin. It recognizes the sequence R-G-D in its ligands. Internalization of integrin alpha-V/beta-6 via clathrin-mediated endocytosis promotes carcinoma cell invasion. ITGAV:ITGB6 acts as a receptor for fibrillin-1 (FBN1) and mediates R-G-D-dependent cell adhesion to FBN1. Integrin alpha-V:beta-6 (ITGAV:ITGB6) mediates R-G-D-dependent release of transforming growth factor beta-1 (TGF-beta-1) from regulatory Latency-associated peptide (LAP), thereby playing a key role in TGF-beta-1 activation. In terms of biological role, (Microbial infection) Integrin ITGAV:ITGB6 acts as a receptor for Coxsackievirus A9 and Coxsackievirus B1. (Microbial infection) Integrin ITGAV:ITGB6 acts as a receptor for Herpes simplex virus-1/HHV-1. This Homo sapiens (Human) protein is Integrin beta-6 (ITGB6).